A 480-amino-acid chain; its full sequence is MTRFIDRVVIHARAGNGGNGCASVHREKFKPLGGPDGGNGGRGGSVVFVVDPQVHTLLDFHFHPHVVAPSGKQGAGSNRDGAAGTDLEVKVPDGTVVLDEHGQILADLVGEGTRFEAAAGGRGGLGNAALASRARKAPGFALLGEKGESRDLTLELKTVADVGLVGFPSAGKSSLVSTISAAKPKIADYPFTTLAPNLGVVSAGEHTYTVADVPGLIPGASQGRGLGLDFLRHIERCAVLVHVIDCATLEPGRDPISDIEALEAELAAYTPTLQGDSTLGDLAERPRAVVLNKIDVPEARELADFVREEIEAKFGWPVFEISTVAREGLRQLTFALWDMVAAYRAAQPAAVSRRPVIRPIPVDETAFSVVPDGQGGFIVKGTRPQRWVAQTNFDNDEAVGYLGDRLARLGVEDALLKLGARPGCAVTIGDMTFDWEPQTPAGVDVPLTGRGTDVRLEQTDRVGADERKAARKARRQSGDE.

Residues 2 to 159 (TRFIDRVVIH…RDLTLELKTV (158 aa)) form the Obg domain. The OBG-type G domain maps to 160-341 (ADVGLVGFPS…LTFALWDMVA (182 aa)). GTP is bound by residues 166–173 (GFPSAGKS), 191–195 (FTTLA), 212–215 (DVPG), 292–295 (NKID), and 322–324 (STV). Residues Ser-173 and Thr-193 each contribute to the Mg(2+) site. Residues 359 to 437 (PIPVDETAFS…IGDMTFDWEP (79 aa)) form the OCT domain. Residues 441-480 (AGVDVPLTGRGTDVRLEQTDRVGADERKAARKARRQSGDE) form a disordered region. Basic and acidic residues predominate over residues 452 to 468 (TDVRLEQTDRVGADERK). The segment covering 469 to 480 (AARKARRQSGDE) has biased composition (basic residues).

Belongs to the TRAFAC class OBG-HflX-like GTPase superfamily. OBG GTPase family. In terms of assembly, monomer. Requires Mg(2+) as cofactor.

Its subcellular location is the cytoplasm. Its function is as follows. An essential GTPase which binds GTP, GDP and possibly (p)ppGpp with moderate affinity, with high nucleotide exchange rates and a fairly low GTP hydrolysis rate. Plays a role in control of the cell cycle, stress response, ribosome biogenesis and in those bacteria that undergo differentiation, in morphogenesis control. The chain is GTPase Obg from Mycolicibacterium vanbaalenii (strain DSM 7251 / JCM 13017 / BCRC 16820 / KCTC 9966 / NRRL B-24157 / PYR-1) (Mycobacterium vanbaalenii).